The chain runs to 102 residues: Large ribosomal subunit protein uL24 (102 aa).

The tract at residues 44–65 (HAKPSQDNPQGGILNQEAPIHS) is disordered.

Belongs to the universal ribosomal protein uL24 family. Part of the 50S ribosomal subunit.

One of two assembly initiator proteins, it binds directly to the 5'-end of the 23S rRNA, where it nucleates assembly of the 50S subunit. Functionally, one of the proteins that surrounds the polypeptide exit tunnel on the outside of the subunit. This chain is Large ribosomal subunit protein uL24, found in Shouchella clausii (strain KSM-K16) (Alkalihalobacillus clausii).